A 130-amino-acid chain; its full sequence is Large ribosomal subunit protein bL19 (130 aa).

This sequence belongs to the bacterial ribosomal protein bL19 family.

Its function is as follows. This protein is located at the 30S-50S ribosomal subunit interface and may play a role in the structure and function of the aminoacyl-tRNA binding site. The chain is Large ribosomal subunit protein bL19 from Gluconobacter oxydans (strain 621H) (Gluconobacter suboxydans).